Reading from the N-terminus, the 338-residue chain is Aspartate carbamoyltransferase catalytic subunit (338 aa).

The carbamoyl phosphate site is built by R59 and T60. K87 is an L-aspartate binding site. Carbamoyl phosphate-binding residues include R109, H142, and Q145. R182 and R253 together coordinate L-aspartate. Positions 294 and 295 each coordinate carbamoyl phosphate.

The protein belongs to the aspartate/ornithine carbamoyltransferase superfamily. ATCase family. As to quaternary structure, heterododecamer (2C3:3R2) of six catalytic PyrB chains organized as two trimers (C3), and six regulatory PyrI chains organized as three dimers (R2).

The catalysed reaction is carbamoyl phosphate + L-aspartate = N-carbamoyl-L-aspartate + phosphate + H(+). It participates in pyrimidine metabolism; UMP biosynthesis via de novo pathway; (S)-dihydroorotate from bicarbonate: step 2/3. Its function is as follows. Catalyzes the condensation of carbamoyl phosphate and aspartate to form carbamoyl aspartate and inorganic phosphate, the committed step in the de novo pyrimidine nucleotide biosynthesis pathway. The polypeptide is Aspartate carbamoyltransferase catalytic subunit (Prochlorococcus marinus (strain MIT 9301)).